Here is a 502-residue protein sequence, read N- to C-terminus: Neuronal acetylcholine receptor subunit alpha-7 (502 aa).

The first 23 residues, 1–23 (MGLRALMLWLLAAAGLVRESLQG), serve as a signal peptide directing secretion. Topologically, residues 24–233 (EFQRKLYKEL…VTMRRRTLYY (210 aa)) are extracellular. Ca(2+) contacts are provided by R42 and V44. 3 N-linked (GlcNAc...) asparagine glycosylation sites follow: N46, N90, and N133. C150 and C164 are disulfide-bonded. Ca(2+) is bound by residues T172 and Y210. C212 and C213 are joined by a disulfide. The next 3 membrane-spanning stretches (helical) occupy residues 234–254 (GLNLLIPCVLISALALLVFLL), 262–282 (ISLGITVLLSLTVFMLLVAEI), and 295–315 (QYFASTMIIVGLSVVVTVIVL). The Cytoplasmic portion of the chain corresponds to 316-469 (QYHHHDPDGG…WKFAASVVDR (154 aa)). A helical membrane pass occupies residues 470 to 490 (LCLMAFSVFTIICTIGILMSA).

Belongs to the ligand-gated ion channel (TC 1.A.9) family. Acetylcholine receptor (TC 1.A.9.1) subfamily. Alpha-7/CHRNA7 sub-subfamily. Homopentamer. Can also form heteropentamers with CHRNB2, mainly found in basal forebrain cholinergic neurons.

The protein resides in the postsynaptic cell membrane. It localises to the cell membrane. The enzyme catalyses Ca(2+)(in) = Ca(2+)(out). It catalyses the reaction K(+)(in) = K(+)(out). The catalysed reaction is Na(+)(in) = Na(+)(out). It carries out the reaction choline(out) = choline(in). The enzyme catalyses NH4(+)(in) = NH4(+)(out). It catalyses the reaction L-arginine(in) = L-arginine(out). The catalysed reaction is guanidine(out) = guanidine(in). Activated by a myriad of ligands such as acetylcholine, cytisine, nicotine, choline and epibatidine. Activity is modulated by positive allosteric modulators (PAMs), such as flavonoids, with a wide range of chemical diversity, pharmacological sensitivity and efficacy. AChR activity is inhibited by the antagonists alpha-conotoxons RgIA, ImI and ImII, small disulfide-constrained peptides from cone snails. In terms of biological role, component of neuronal acetylcholine receptors (nAChRs) that function as pentameric, ligand-gated cation channels with high calcium permeability among other activities. nAChRs are excitatory neurotrasnmitter receptors formed by a collection of nAChR subunits known to mediate synaptic transmission in the nervous system and the neuromuscular junction. Each nAchR subunit confers differential attributes to channel properties, including activation, deactivation and desensitization kinetics, pH sensitivity, cation permeability, and binding to allosteric modulators. CHRNA7 is an homooligomeric neuronal acetylcholine receptor abundantly expressed in the central nervous system. Characterized by a fast desensitization and high calcium permeability. Also expressed in non-neuronal cells such as immune cells like lymphocytes, monocytes and macrophages. This Gallus gallus (Chicken) protein is Neuronal acetylcholine receptor subunit alpha-7 (CHRNA7).